We begin with the raw amino-acid sequence, 454 residues long: 3-phosphoshikimate 1-carboxyvinyltransferase (454 aa).

The 3-phosphoshikimate site is built by Lys39, Ser40, and Arg44. Lys39 is a binding site for phosphoenolpyruvate. Phosphoenolpyruvate-binding residues include Gly112 and Arg140. Ser185, Gln187, Asp333, and Lys360 together coordinate 3-phosphoshikimate. Gln187 contributes to the phosphoenolpyruvate binding site. Catalysis depends on Asp333, which acts as the Proton acceptor. Phosphoenolpyruvate is bound by residues Arg364 and Arg405.

The protein belongs to the EPSP synthase family. In terms of assembly, monomer.

It is found in the cytoplasm. The catalysed reaction is 3-phosphoshikimate + phosphoenolpyruvate = 5-O-(1-carboxyvinyl)-3-phosphoshikimate + phosphate. Its pathway is metabolic intermediate biosynthesis; chorismate biosynthesis; chorismate from D-erythrose 4-phosphate and phosphoenolpyruvate: step 6/7. In terms of biological role, catalyzes the transfer of the enolpyruvyl moiety of phosphoenolpyruvate (PEP) to the 5-hydroxyl of shikimate-3-phosphate (S3P) to produce enolpyruvyl shikimate-3-phosphate and inorganic phosphate. The sequence is that of 3-phosphoshikimate 1-carboxyvinyltransferase from Xylella fastidiosa (strain 9a5c).